The chain runs to 359 residues: Src kinase-associated phosphoprotein 2 (359 aa).

A phosphoserine mark is found at S5, S6, and S9. A homodimerization region spans residues 14-64 (PEEIRNLLADVETFVADILKGENLSKKAKEKRESLIKKIKDVKSIYLQEFQ). The interval 66–88 (KGDAEDGEEYDDPFAGPPDTISL) is disordered. A Phosphotyrosine modification is found at Y75. Residues S87 and S90 each carry the phosphoserine modification. A PH domain is found at 116 to 219 (FVLKAGYLEK…WVQQLKFVLQ (104 aa)). A phosphotyrosine mark is found at Y151 and Y197. S223 is modified (phosphoserine). Y261 bears the Phosphotyrosine mark. The segment at 264–293 (LPEEEEDSAPVKVEEQRKMSQDSVHHTSGD) is disordered. The segment covering 275–293 (KVEEQRKMSQDSVHHTSGD) has biased composition (basic and acidic residues). A phosphoserine mark is found at S283 and S286. The SH3 domain maps to 297–358 (DYANFYQGLW…PKAYIMEMYD (62 aa)).

It belongs to the SKAP family. In terms of assembly, homodimer. Interacts with PTPNS1. Part of a complex consisting of SKAP2, FYB1 and PTPNS1. Part of a complex consisting of SKAP2, FYB1 and LILRB3. May interact with actin. Interacts with FYB1, which is required for SKAP2 protein stability. Interacts with LAT, GRB2, PTK2B and PRAM1. May interact with FYN, HCK and LYN. Interacts with FASLG. In terms of processing, phosphorylated in resting platelets. Phosphorylated by FYN on Tyr-261 upon T-cell activation. Dephosphorylated on Tyr-75 by PTPN22. As to expression, ubiquitously expressed. Present in platelets (at protein level).

Its subcellular location is the cytoplasm. Functionally, may be involved in B-cell and macrophage adhesion processes. In B-cells, may act by coupling the B-cell receptor (BCR) to integrin activation. May play a role in src signaling pathway. The protein is Src kinase-associated phosphoprotein 2 (SKAP2) of Homo sapiens (Human).